A 157-amino-acid polypeptide reads, in one-letter code: Small ribosomal subunit protein uS7 (157 aa).

It belongs to the universal ribosomal protein uS7 family. As to quaternary structure, part of the 30S ribosomal subunit. Contacts proteins S9 and S11.

In terms of biological role, one of the primary rRNA binding proteins, it binds directly to 16S rRNA where it nucleates assembly of the head domain of the 30S subunit. Is located at the subunit interface close to the decoding center, probably blocks exit of the E-site tRNA. This is Small ribosomal subunit protein uS7 from Psychrobacter sp. (strain PRwf-1).